A 250-amino-acid chain; its full sequence is Type-1Ab cytolytic delta-endotoxin (250 aa).

Belongs to the cyt1/cyt2 endotoxin family. In terms of processing, active after proteolytic processing.

In terms of biological role, kills the larvae of dipteran insects by making pores in the epithelial cell membrane of the insect midgut. This chain is Type-1Ab cytolytic delta-endotoxin (cyt1Ab1), found in Bacillus thuringiensis subsp. medellin.